Consider the following 920-residue polypeptide: Sensor histidine kinase SsrA (920 aa).

The Cytoplasmic portion of the chain corresponds to 1 to 19 (MNLLNLKNTLQTSLVIRLT). A helical transmembrane segment spans residues 20–40 (FLFLLTTIIIWLLSVLTAAYI). The Periplasmic portion of the chain corresponds to 41–291 (SMVQKRQHII…YGNLHNRILK (251 aa)). A helical transmembrane segment spans residues 292–312 (IILQQIPFTLTALVLMTSAFC). Residues 313–920 (WLLHRSLAKP…RMIFKNYTIT (608 aa)) lie on the Cytoplasmic side of the membrane. In terms of domain architecture, HAMP spans 317–369 (RSLAKPLWRFVDVINKTATAPLSTRLPAQRLDELDSIAGAFNQLLDTLQVQYD). Residues 354–395 (AGAFNQLLDTLQVQYDNLENKVAERTQALNEAKKRAERANKR) adopt a coiled-coil conformation. The region spanning 402 to 614 (VISHELRTPM…CVSLVLPLQE (213 aa)) is the Histidine kinase domain. ATP is bound by residues His-405 and Asp-549. Position 405 is a phosphohistidine; by autocatalysis (His-405). One can recognise a Response regulatory domain in the interval 690–808 (QILLVDDADI…TLARYISIAA (119 aa)). Asp-739 bears the 4-aspartylphosphate mark.

Autophosphorylated.

The protein resides in the cell inner membrane. It catalyses the reaction ATP + protein L-histidine = ADP + protein N-phospho-L-histidine.. In terms of biological role, member of the two-component regulatory system SsrA/SsrB (SpiR/SsrB) that is required for intracellular proliferation and systemic dissemination within the host. When inside acidic Salmonella-containing vesicles (SCV) within host cells the SsrA sensor kinase autophosphorylates and the phosphoryl group is transferred to the response regulator SsrB; phosphorylated SsrB activates the expression of genes encoding virulence proteins, including pathogenicity island 2 (SPI2) and other horizontally acquired genes, and antagonizes the action of transcriptional repressor hns (H-NS). In Salmonella typhimurium (strain LT2 / SGSC1412 / ATCC 700720), this protein is Sensor histidine kinase SsrA.